The primary structure comprises 735 residues: Ion-translocating oxidoreductase complex subunit C (735 aa).

2 4Fe-4S ferredoxin-type domains span residues 368-397 (MGAPQEEKSCIRCSACADACPADLLPQQLY) and 407-436 (KATAHHIADCIECGACAWVCPSNIPLVQYF). Positions 377, 380, 383, 387, 416, 419, 422, and 426 each coordinate [4Fe-4S] cluster. The segment at 534-716 (QARAKQAAHP…ADPRKAAVAA (183 aa)) is disordered.

This sequence belongs to the 4Fe4S bacterial-type ferredoxin family. RnfC subfamily. In terms of assembly, the complex is composed of six subunits: RsxA, RsxB, RsxC, RsxD, RsxE and RsxG. It depends on [4Fe-4S] cluster as a cofactor.

It localises to the cell inner membrane. Part of a membrane-bound complex that couples electron transfer with translocation of ions across the membrane. Required to maintain the reduced state of SoxR. In Salmonella agona (strain SL483), this protein is Ion-translocating oxidoreductase complex subunit C.